A 155-amino-acid polypeptide reads, in one-letter code: MSEQNNTEMAFQIQRIYTKDVSFEAPNAPHVFQKDWQPEVKLDLDTASTQLADDVYEVVLRVTVTASLGEETAFLCEVQQGGIFSISGIEGTQMAHCLGAYCPNILFPYARECITSLVSRGTFPQLNLAPVNFDALFMNYLQQQAGEGTEEHQDA.

Belongs to the SecB family. As to quaternary structure, homotetramer, a dimer of dimers. One homotetramer interacts with 1 SecA dimer.

It localises to the cytoplasm. One of the proteins required for the normal export of preproteins out of the cell cytoplasm. It is a molecular chaperone that binds to a subset of precursor proteins, maintaining them in a translocation-competent state. It also specifically binds to its receptor SecA. This is Protein-export protein SecB from Citrobacter koseri (strain ATCC BAA-895 / CDC 4225-83 / SGSC4696).